The following is a 615-amino-acid chain: Chaperone protein DnaK (615 aa).

T195 is subject to Phosphothreonine; by autocatalysis. A disordered region spans residues 592–615 (EKGAQAASGKGPDDVIDADYKPAD).

This sequence belongs to the heat shock protein 70 family.

Acts as a chaperone. The polypeptide is Chaperone protein DnaK (Thermus thermophilus (strain ATCC BAA-163 / DSM 7039 / HB27)).